Here is a 445-residue protein sequence, read N- to C-terminus: Enolase 1 (445 aa).

The substrate site is built by H164 and E173. E216 functions as the Proton donor in the catalytic mechanism. Positions 251, 301, and 328 each coordinate Mg(2+). Substrate is bound by residues E301 and D328. K353 (proton acceptor) is an active-site residue. Substrate contacts are provided by residues S380–S383 and K404.

This sequence belongs to the enolase family. In terms of assembly, homodimer. The cofactor is Mg(2+).

It is found in the cytoplasm. It catalyses the reaction (2R)-2-phosphoglycerate = phosphoenolpyruvate + H2O. It functions in the pathway carbohydrate degradation; glycolysis; pyruvate from D-glyceraldehyde 3-phosphate: step 4/5. In Hevea brasiliensis (Para rubber tree), this protein is Enolase 1 (ENO1).